We begin with the raw amino-acid sequence, 189 residues long: Phosphoheptose isomerase (189 aa).

The SIS domain maps to 34 to 189 (LVDALGNGKK…CDLLEKRLFG (156 aa)). Position 49–51 (49–51 (NGG)) interacts with substrate. Zn(2+)-binding residues include His58 and Glu62. Substrate is bound by residues Glu62, 91–92 (ND), 117–119 (STS), Ser122, and Gln169. Positions 169 and 177 each coordinate Zn(2+).

This sequence belongs to the SIS family. GmhA subfamily. In terms of assembly, homotetramer. Requires Zn(2+) as cofactor.

The protein resides in the cytoplasm. The enzyme catalyses 2 D-sedoheptulose 7-phosphate = D-glycero-alpha-D-manno-heptose 7-phosphate + D-glycero-beta-D-manno-heptose 7-phosphate. It participates in carbohydrate biosynthesis; D-glycero-D-manno-heptose 7-phosphate biosynthesis; D-glycero-alpha-D-manno-heptose 7-phosphate and D-glycero-beta-D-manno-heptose 7-phosphate from sedoheptulose 7-phosphate: step 1/1. Catalyzes the isomerization of sedoheptulose 7-phosphate in D-glycero-D-manno-heptose 7-phosphate. The protein is Phosphoheptose isomerase of Geotalea uraniireducens (strain Rf4) (Geobacter uraniireducens).